The chain runs to 740 residues: MPSNMFIQADKKKRLSLDVIGQLEDDLEADPLDYNKWNKLIQQVLAKDKEEQVKSVFNKYLNIFNFDQWCNYINYQLNRGEFQEVEQLFSKCLPITDHVELCRLYVSYVRRTNDVITGGEKARGIVVQAFEFAVTKVGIDISSGDLWNDYLDFLKAWTPAATWEQQQKTDLIRRVYKRFLVIPTEKIEQVWSTYTKWENEVNASSANKFIAEKSSEFMDARSWNTEWHNATERSLRREVIPIGIHNDNNNLVHTQLQLWYKWIALERENKLNLKDDSSVQQRIEYVYKQAIMALPFVPELWFKFNKFWLRSNEEANSNKCIELLNEALVLNPRSYLLTFQLSEMYEKDNTINKATETYDNLITFLTNDYNNINNQIESITNRELNNKKQEENTGEENNNENDDSDNDDNDDDDSFKNPTFQLSEEDALLLSKLQEKKDELNKAITLVYTKLMMACKRSRGIKEARGVFKQARNNFEAIGYEFYVENALMEYHSDNLKTASKIFELGMKHFKKQGEFLLAYLDFLIMINKGESIKVLFEQGLTALLQDVNIENENSNGDITSGANMRLQESKSKENIKKKNCIKKLIKKFSRYQSVYGDLDLIKSLDSRYEEYFPDDDSIELFSDRYRGHSIDVIKHFDLGKEDTSHEEIDTTAQETKRRKIQNPTVDEFTPEVSNNNNQHTNNKDAVQNQQQPQNFVGNTIYNLLRVLPNSSYFGPPSDHLFNNTKLVELFGNLPNVPTE.

HAT repeat units lie at residues aspartate 48–asparagine 78, glycine 80–aspartate 114, lysine 121–alanine 156, glutamine 167–glutamate 200, arginine 236–glutamate 268, and serine 278–arginine 310. Residues asparagine 381 to proline 418 form a disordered region. A compositionally biased stretch (acidic residues) spans asparagine 392–aspartate 413. The HAT 7 repeat unit spans residues aspartate 494 to methionine 526. Positions glutamate 668–glutamine 688 are disordered. Positions glutamate 672–glutamine 688 are enriched in polar residues.

The protein resides in the nucleus. The protein localises to the cytoplasm. In terms of biological role, component of the cleavage factor IA (CFIA) complex, which is involved in the endonucleolytic cleavage during polyadenylation-dependent pre-mRNA 3'-end formation. This Debaryomyces hansenii (strain ATCC 36239 / CBS 767 / BCRC 21394 / JCM 1990 / NBRC 0083 / IGC 2968) (Yeast) protein is mRNA 3'-end-processing protein RNA14 (RNA14).